Reading from the N-terminus, the 142-residue chain is Large ribosomal subunit protein uL13 (142 aa).

The protein belongs to the universal ribosomal protein uL13 family. As to quaternary structure, part of the 50S ribosomal subunit.

Functionally, this protein is one of the early assembly proteins of the 50S ribosomal subunit, although it is not seen to bind rRNA by itself. It is important during the early stages of 50S assembly. The sequence is that of Large ribosomal subunit protein uL13 from Mannheimia succiniciproducens (strain KCTC 0769BP / MBEL55E).